Here is a 350-residue protein sequence, read N- to C-terminus: tRNA uridine(34) hydroxylase (350 aa).

Positions 146 to 240 (DDPDALFIDM…YARKAREQGL (95 aa)) constitute a Rhodanese domain. The active-site Cysteine persulfide intermediate is the C200.

This sequence belongs to the TrhO family.

The catalysed reaction is uridine(34) in tRNA + AH2 + O2 = 5-hydroxyuridine(34) in tRNA + A + H2O. Catalyzes oxygen-dependent 5-hydroxyuridine (ho5U) modification at position 34 in tRNAs. This Shigella dysenteriae serotype 1 (strain Sd197) protein is tRNA uridine(34) hydroxylase.